We begin with the raw amino-acid sequence, 149 residues long: SsrA-binding protein (149 aa).

The protein belongs to the SmpB family.

Its subcellular location is the cytoplasm. Functionally, required for rescue of stalled ribosomes mediated by trans-translation. Binds to transfer-messenger RNA (tmRNA), required for stable association of tmRNA with ribosomes. tmRNA and SmpB together mimic tRNA shape, replacing the anticodon stem-loop with SmpB. tmRNA is encoded by the ssrA gene; the 2 termini fold to resemble tRNA(Ala) and it encodes a 'tag peptide', a short internal open reading frame. During trans-translation Ala-aminoacylated tmRNA acts like a tRNA, entering the A-site of stalled ribosomes, displacing the stalled mRNA. The ribosome then switches to translate the ORF on the tmRNA; the nascent peptide is terminated with the 'tag peptide' encoded by the tmRNA and targeted for degradation. The ribosome is freed to recommence translation, which seems to be the essential function of trans-translation. The sequence is that of SsrA-binding protein from Carboxydothermus hydrogenoformans (strain ATCC BAA-161 / DSM 6008 / Z-2901).